Consider the following 397-residue polypeptide: ATP-dependent RNA helicase eIF4A (397 aa).

The Q motif signature appears at 23–51 (YKFDDLNLKPNIVRGIFGYGYETPSAIQQ). The 171-residue stretch at 54 to 224 (ILPITEGRDV…TKFMNNPVRI (171 aa)) folds into the Helicase ATP-binding domain. 67-74 (AQSGTGKT) serves as a coordination point for ATP. The short motif at 172–175 (DEAD) is the DEAD box element. One can recognise a Helicase C-terminal domain in the interval 235 to 396 (GIKQFYINVE…EMPADIGALF (162 aa)).

Belongs to the DEAD box helicase family. eIF4A subfamily. As to quaternary structure, component of the eIF4F complex, which composition varies with external and internal environmental conditions. It is composed of at least eIF4A, eIF4E and eIF4G.

The protein localises to the cytoplasm. It catalyses the reaction ATP + H2O = ADP + phosphate + H(+). ATP-dependent RNA helicase which is a subunit of the eIF4F complex involved in cap recognition and is required for mRNA binding to ribosome. In the current model of translation initiation, eIF4A unwinds RNA secondary structures in the 5'-UTR of mRNAs which is necessary to allow efficient binding of the small ribosomal subunit, and subsequent scanning for the initiator codon. This is ATP-dependent RNA helicase eIF4A (TIF1) from Scheffersomyces stipitis (strain ATCC 58785 / CBS 6054 / NBRC 10063 / NRRL Y-11545) (Yeast).